Reading from the N-terminus, the 350-residue chain is tRNA uridine(34) hydroxylase (350 aa).

The 95-residue stretch at 146 to 240 (DDPDAVFIDM…YARRAREQGL (95 aa)) folds into the Rhodanese domain. Cys-200 (cysteine persulfide intermediate) is an active-site residue. Basic and acidic residues predominate over residues 319 to 328 (RRRRAGRENG). Residues 319–350 (RRRRAGRENGNKIFNKSRGRLNSKLSIPDPAE) are disordered.

The protein belongs to the TrhO family.

It carries out the reaction uridine(34) in tRNA + AH2 + O2 = 5-hydroxyuridine(34) in tRNA + A + H2O. Catalyzes oxygen-dependent 5-hydroxyuridine (ho5U) modification at position 34 in tRNAs. The sequence is that of tRNA uridine(34) hydroxylase from Salmonella agona (strain SL483).